Consider the following 202-residue polypeptide: dITP/XTP pyrophosphatase (202 aa).

Residue 7 to 12 (SNNPGK) participates in substrate binding. Glutamate 39 and aspartate 68 together coordinate Mg(2+). The active-site Proton acceptor is aspartate 68. Residues alanine 69, 157 to 160 (FGFD), lysine 180, and 185 to 186 (HR) each bind substrate.

The protein belongs to the HAM1 NTPase family. In terms of assembly, homodimer. The cofactor is Mg(2+).

It carries out the reaction XTP + H2O = XMP + diphosphate + H(+). The catalysed reaction is dITP + H2O = dIMP + diphosphate + H(+). The enzyme catalyses ITP + H2O = IMP + diphosphate + H(+). Functionally, pyrophosphatase that catalyzes the hydrolysis of nucleoside triphosphates to their monophosphate derivatives, with a high preference for the non-canonical purine nucleotides XTP (xanthosine triphosphate), dITP (deoxyinosine triphosphate) and ITP. Seems to function as a house-cleaning enzyme that removes non-canonical purine nucleotides from the nucleotide pool, thus preventing their incorporation into DNA/RNA and avoiding chromosomal lesions. The sequence is that of dITP/XTP pyrophosphatase from Polaromonas naphthalenivorans (strain CJ2).